The chain runs to 122 residues: Prefoldin subunit 1 (122 aa).

Position 2 is an N-acetylalanine (alanine 2).

It belongs to the prefoldin subunit beta family. Heterohexamer of two PFD-alpha type and four PFD-beta type subunits.

Binds specifically to cytosolic chaperonin (c-CPN) and transfers target proteins to it. Binds to nascent polypeptide chain and promotes folding in an environment in which there are many competing pathways for nonnative proteins. The chain is Prefoldin subunit 1 (PFDN1) from Homo sapiens (Human).